The sequence spans 245 residues: Ribonuclease P protein component 3 (245 aa).

Belongs to the eukaryotic/archaeal RNase P protein component 3 family. Consists of a catalytic RNA component and at least 4-5 protein subunits.

It localises to the cytoplasm. It carries out the reaction Endonucleolytic cleavage of RNA, removing 5'-extranucleotides from tRNA precursor.. In terms of biological role, part of ribonuclease P, a protein complex that generates mature tRNA molecules by cleaving their 5'-ends. The polypeptide is Ribonuclease P protein component 3 (Methanothermobacter thermautotrophicus (strain ATCC 29096 / DSM 1053 / JCM 10044 / NBRC 100330 / Delta H) (Methanobacterium thermoautotrophicum)).